The primary structure comprises 323 residues: Aspartate carbamoyltransferase catalytic subunit (323 aa).

Residues Arg71 and Thr72 each coordinate carbamoyl phosphate. Residue Lys99 participates in L-aspartate binding. Carbamoyl phosphate-binding residues include Arg121, His151, and Gln154. L-aspartate is bound by residues Arg184 and Arg239. Carbamoyl phosphate contacts are provided by Gly280 and Pro281.

This sequence belongs to the aspartate/ornithine carbamoyltransferase superfamily. ATCase family. In terms of assembly, heterododecamer (2C3:3R2) of six catalytic PyrB chains organized as two trimers (C3), and six regulatory PyrI chains organized as three dimers (R2).

It catalyses the reaction carbamoyl phosphate + L-aspartate = N-carbamoyl-L-aspartate + phosphate + H(+). The protein operates within pyrimidine metabolism; UMP biosynthesis via de novo pathway; (S)-dihydroorotate from bicarbonate: step 2/3. Catalyzes the condensation of carbamoyl phosphate and aspartate to form carbamoyl aspartate and inorganic phosphate, the committed step in the de novo pyrimidine nucleotide biosynthesis pathway. This chain is Aspartate carbamoyltransferase catalytic subunit, found in Cupriavidus taiwanensis (strain DSM 17343 / BCRC 17206 / CCUG 44338 / CIP 107171 / LMG 19424 / R1) (Ralstonia taiwanensis (strain LMG 19424)).